We begin with the raw amino-acid sequence, 202 residues long: Na(+)-translocating NADH-quinone reductase subunit E (202 aa).

The next 6 membrane-spanning stretches (helical) occupy residues 11–31, 35–55, 81–101, 114–134, 144–164, and 180–200; these read SVFI…FLAM, INAA…TVPA, FLSF…MEMV, GVFL…LFMV, VVYG…LAGI, and LGIT…FGGI.

The protein belongs to the NqrDE/RnfAE family. As to quaternary structure, composed of six subunits; NqrA, NqrB, NqrC, NqrD, NqrE and NqrF.

Its subcellular location is the cell inner membrane. It carries out the reaction a ubiquinone + n Na(+)(in) + NADH + H(+) = a ubiquinol + n Na(+)(out) + NAD(+). Functionally, NQR complex catalyzes the reduction of ubiquinone-1 to ubiquinol by two successive reactions, coupled with the transport of Na(+) ions from the cytoplasm to the periplasm. NqrA to NqrE are probably involved in the second step, the conversion of ubisemiquinone to ubiquinol. The polypeptide is Na(+)-translocating NADH-quinone reductase subunit E (Cellvibrio japonicus (strain Ueda107) (Pseudomonas fluorescens subsp. cellulosa)).